The sequence spans 78 residues: Large ribosomal subunit protein bL28 (78 aa).

Belongs to the bacterial ribosomal protein bL28 family.

The polypeptide is Large ribosomal subunit protein bL28 (Prochlorococcus marinus (strain MIT 9211)).